The chain runs to 217 residues: Cytochrome b5 domain-containing protein 1 (217 aa).

In terms of domain architecture, Cytochrome b5 heme-binding spans 6 to 72; it reads PRYFTPREVS…NPKTGDVKTH (67 aa). The heme site is built by His41 and His72.

This sequence belongs to the cytochrome b5 family.

The protein resides in the cytoplasm. The protein localises to the cytoskeleton. It is found in the cilium axoneme. Radial spoke stalk protein that binds heme under oxidizing conditions. Required for the coordinated beating of multiple cilia maybe by functioning in a redox signaling pathway. This Xenopus laevis (African clawed frog) protein is Cytochrome b5 domain-containing protein 1 (cyb5d1).